Reading from the N-terminus, the 162-residue chain is MNGQRYRETPLDIERLRRLNRATVERYMAMKGAERLQRHSLFVEDGCAGNWTTESGEPLVFRGHESLRRLAEWLERCFPDWEWHNVRIFETEDPNHFWVECDGRGKALVPGYPQGYCENHYIHSFELENGRIKRNREFMNPIQKLRALGIAVPQIKRDGIPT.

Belongs to the PhzA/PhzB family.

Its pathway is antibiotic biosynthesis; phenazine biosynthesis. Its function is as follows. Involved in the biosynthesis of the antibiotic phenazine, a nitrogen-containing heterocyclic molecule. PhzA1 (operon phzA1B1C1E1F1G1) has a role in the biosynthesis of the phenazine during planktonic growth. The polypeptide is Phenazine biosynthesis protein PhzA1 (Pseudomonas aeruginosa (strain ATCC 15692 / DSM 22644 / CIP 104116 / JCM 14847 / LMG 12228 / 1C / PRS 101 / PAO1)).